Reading from the N-terminus, the 150-residue chain is Large ribosomal subunit protein bL9 (150 aa).

This sequence belongs to the bacterial ribosomal protein bL9 family.

In terms of biological role, binds to the 23S rRNA. This is Large ribosomal subunit protein bL9 from Paraburkholderia phytofirmans (strain DSM 17436 / LMG 22146 / PsJN) (Burkholderia phytofirmans).